Reading from the N-terminus, the 861-residue chain is Glucans biosynthesis glucosyltransferase H (861 aa).

2 disordered regions span residues 65-89 (RLSAREPAKGETPEPGGSTYGSVGR) and 101-129 (AGEPLLKRRPDGTVHVDTGPEPQRSSMVP). 2 stretches are compositionally biased toward basic and acidic residues: residues 67–76 (SAREPAKGET) and 105–114 (LLKRRPDGTV). A run of 6 helical transmembrane segments spans residues 181 to 201 (FLLGLVVAQTTLATYFMTKVL), 208 to 228 (LLEIAILVLFAVLFSWVSAGF), 532 to 552 (VFLTGIMAYLSAPLWFLFLLL), 589 to 609 (LFSATATLLFLPKVASILLLV), 616 to 636 (GGLPRLVMSMLIEVVLSALLA), and 698 to 718 (FVLWLLPIVGSLALSIPLSVM).

This sequence belongs to the glycosyltransferase 2 family. OpgH subfamily.

It localises to the cell inner membrane. It participates in glycan metabolism; osmoregulated periplasmic glucan (OPG) biosynthesis. In terms of biological role, involved in the biosynthesis of osmoregulated periplasmic glucans (OPGs). The sequence is that of Glucans biosynthesis glucosyltransferase H from Cupriavidus pinatubonensis (strain JMP 134 / LMG 1197) (Cupriavidus necator (strain JMP 134)).